Reading from the N-terminus, the 331-residue chain is MKRIFSGVKPTGHLTLGNYLGAVRRWVDVDQHGADALFCVVDLHALTVDHDPARVRRLSRQAATLMLAAGLDPELCTVFVQSHVDEHARLSYLMECVATDGEMRRMIQYREKAAREQQRGGSVRLSLLTYPVLMAADILAYGTDEVPVGDDQTQHVELTRDLAVRFNQRYGHTFVVPRATRPEVAARVMNLQEPTSKMGKSDDVGPGIVYLLDEPEAVRKKVMRAVTDSGRDVVYDRESRPGVSNLLEILAACEGGSPEALSGAYASYGALKKDTAEAVVELLRPLQERHKALCAEPGYVEGVLRDGARRARELARPRVDAAYRAIGLLEA.

ATP-binding positions include 9–11 and 17–18; these read KPT and GN. The 'HIGH' region motif lies at 10–18; the sequence is PTGHLTLGN. D137 is a binding site for L-tryptophan. ATP-binding positions include 149-151, V188, and 197-201; these read GDD and KMGKS. Positions 197–201 match the 'KMSKS' region motif; sequence KMGKS.

It belongs to the class-I aminoacyl-tRNA synthetase family. Homodimer.

The protein resides in the cytoplasm. It carries out the reaction tRNA(Trp) + L-tryptophan + ATP = L-tryptophyl-tRNA(Trp) + AMP + diphosphate + H(+). In terms of biological role, catalyzes the attachment of tryptophan to tRNA(Trp). This is Tryptophan--tRNA ligase 1 from Streptomyces avermitilis (strain ATCC 31267 / DSM 46492 / JCM 5070 / NBRC 14893 / NCIMB 12804 / NRRL 8165 / MA-4680).